The sequence spans 655 residues: p-hydroxybenzoic acid efflux pump subunit AaeB (655 aa).

Residues 1-12 lie on the Periplasmic side of the membrane; sequence MGIFSIANQHIR. Residues 13–33 form a helical membrane-spanning segment; it reads FAVKLATAIVLALFVGFHFQL. Over 34–37 the chain is Cytoplasmic; the sequence is ETPR. Residues 38-58 form a helical membrane-spanning segment; it reads WAVLTAAIVAAGTAFAAGGEP. At 59–68 the chain is on the periplasmic side; it reads YSGAIRYRGF. Residues 69–89 form a helical membrane-spanning segment; sequence LRIIGTFIGCIAGLVIIIAMI. The Cytoplasmic segment spans residues 90–92; sequence RAP. The chain crosses the membrane as a helical span at residues 93–113; that stretch reads LLMILVCCIWAGFCTWISSLV. The Periplasmic segment spans residues 114 to 120; that stretch reads RIENSYA. A helical transmembrane segment spans residues 121–141; the sequence is WGLAGYTALIIVITIQPEPLL. Residues 142 to 151 are Cytoplasmic-facing; sequence TPQFAVERCS. A helical membrane pass occupies residues 152 to 172; it reads EIVIGIVCAIMADLLFSPRSI. At 173–369 the chain is on the periplasmic side; it reads KQEVDRELES…RTTLSCILGT (197 aa). The helical transmembrane segment at 370–390 threads the bilayer; sequence LFWLWTGWTSGSGAMVMIAVV. Residues 391 to 406 lie on the Cytoplasmic side of the membrane; the sequence is TSLAMRLPNPRMVAID. A helical membrane pass occupies residues 407–427; that stretch reads FIYGTLAALPLGLLYFLVIIP. Residues 428–430 lie on the Periplasmic side of the membrane; that stretch reads NTQ. Residues 431–451 traverse the membrane as a helical segment; that stretch reads QSMLLLCISLAVLGFFLGIEV. The Cytoplasmic segment spans residues 452 to 458; that stretch reads QKRRLGS. Residues 459 to 479 form a helical membrane-spanning segment; that stretch reads MGALASTINIIVLDNPMTFHF. Topologically, residues 480 to 481 are periplasmic; sequence SQ. The chain crosses the membrane as a helical span at residues 482-502; that stretch reads FLDSALGQIVGCVLAFTVILL. The Cytoplasmic segment spans residues 503-655; the sequence is VRDKSRDRTG…HKYQHALTDS (153 aa).

The protein belongs to the aromatic acid exporter ArAE (TC 2.A.85) family.

The protein resides in the cell inner membrane. Forms an efflux pump with AaeA. Could function as a metabolic relief valve, allowing to eliminate certain compounds when they accumulate to high levels in the cell. Substrates are p-hydroxybenzoic acid (pHBA), 6-hydroxy-2-naphthoic and 2-hydroxycinnamate. This is p-hydroxybenzoic acid efflux pump subunit AaeB from Escherichia coli (strain K12).